Reading from the N-terminus, the 268-residue chain is Tryptophan synthase alpha chain (268 aa).

Catalysis depends on proton acceptor residues Glu49 and Asp60.

The protein belongs to the TrpA family. Tetramer of two alpha and two beta chains.

The catalysed reaction is (1S,2R)-1-C-(indol-3-yl)glycerol 3-phosphate + L-serine = D-glyceraldehyde 3-phosphate + L-tryptophan + H2O. Its pathway is amino-acid biosynthesis; L-tryptophan biosynthesis; L-tryptophan from chorismate: step 5/5. In terms of biological role, the alpha subunit is responsible for the aldol cleavage of indoleglycerol phosphate to indole and glyceraldehyde 3-phosphate. The sequence is that of Tryptophan synthase alpha chain from Vibrio parahaemolyticus serotype O3:K6 (strain RIMD 2210633).